The primary structure comprises 284 residues: MGYLSKLVTSVVFAIPLASAHLAAYTPGMYCPENSYKGTLTNATDPNLVVFDPLYNLPGDSWFLSKGRNCLLAEPTGVWEIAANTIISVPWANWQNSTGYYADGKEYNERPIPYSVTNPEVIAEGLVSESKGLASPNLHAANKSTAAGTAIAISYESNIWAVTMDTLVVISTAPQTPFERLANYSIPDLAPCKECICVTGWVPDGFGQQNMYMAAHKCKITNPTGGKIPKTPSSVPGPGVKGAKQMIAAFQSEGNNVEWNGGEVVPTYSTRMGYLVGAQTDIFD.

Positions methionine 1–alanine 20 are cleaved as a signal peptide. N-linked (GlcNAc...) asparagine glycosylation is found at asparagine 42, asparagine 96, asparagine 142, and asparagine 183. Cysteine 197 and cysteine 218 are disulfide-bonded.

It belongs to the polysaccharide monooxygenase AA14 family. Requires Cu(2+) as cofactor.

It localises to the secreted. In terms of biological role, lytic polysaccharide monooxygenase (LPMO) that plays decomposes some specific network structures formed between cellulose and hemicellulose in the plant cell walls. Catalysis by LPMOs requires the reduction of the active-site copper from Cu(II) to Cu(I) by a reducing agent and H(2)O(2) or O(2) as a cosubstrate. In Talaromyces rugulosus (Penicillium rugulosum), this protein is AA14 family lytic polysaccharide monooxygenase B.